Here is a 223-residue protein sequence, read N- to C-terminus: MSTAAPLVFALPKGRILDEALPLLEKAGIVPEAEFFDKSSRALSFATNRPDVKIIRVRAFDVATFVAHGAAHAGIVGSDVIDEFDYADLYAPVDLDIGHCRLSVAEPVSMVESGANARESHARVATKYPNLTRRHFEKLGVQAEVVKLNGAMELAPSLGLASRIVDLVSTGRTLKENGLVETSRILPVSARLIVNRAALKTDSARLGALVDAFRAMVAAKDAA.

The protein belongs to the ATP phosphoribosyltransferase family. Short subfamily. In terms of assembly, heteromultimer composed of HisG and HisZ subunits.

The protein resides in the cytoplasm. It catalyses the reaction 1-(5-phospho-beta-D-ribosyl)-ATP + diphosphate = 5-phospho-alpha-D-ribose 1-diphosphate + ATP. It participates in amino-acid biosynthesis; L-histidine biosynthesis; L-histidine from 5-phospho-alpha-D-ribose 1-diphosphate: step 1/9. Its function is as follows. Catalyzes the condensation of ATP and 5-phosphoribose 1-diphosphate to form N'-(5'-phosphoribosyl)-ATP (PR-ATP). Has a crucial role in the pathway because the rate of histidine biosynthesis seems to be controlled primarily by regulation of HisG enzymatic activity. The polypeptide is ATP phosphoribosyltransferase (Novosphingobium aromaticivorans (strain ATCC 700278 / DSM 12444 / CCUG 56034 / CIP 105152 / NBRC 16084 / F199)).